The primary structure comprises 124 residues: NAD(P)H-quinone oxidoreductase subunit 5, chloroplastic (124 aa).

The next 3 membrane-spanning stretches (helical) occupy residues 22 to 42 (TPISALIHAATMVAAGIFLVA), 44 to 64 (LLPLFIVIPSIMTGIALIGII), and 91 to 111 (LGYMMLALGMGSYRAALFHLI).

Belongs to the complex I subunit 5 family. As to quaternary structure, NDH is composed of at least 16 different subunits, 5 of which are encoded in the nucleus.

The protein resides in the plastid. Its subcellular location is the chloroplast thylakoid membrane. The catalysed reaction is a plastoquinone + NADH + (n+1) H(+)(in) = a plastoquinol + NAD(+) + n H(+)(out). It carries out the reaction a plastoquinone + NADPH + (n+1) H(+)(in) = a plastoquinol + NADP(+) + n H(+)(out). In terms of biological role, NDH shuttles electrons from NAD(P)H:plastoquinone, via FMN and iron-sulfur (Fe-S) centers, to quinones in the photosynthetic chain and possibly in a chloroplast respiratory chain. The immediate electron acceptor for the enzyme in this species is believed to be plastoquinone. Couples the redox reaction to proton translocation, and thus conserves the redox energy in a proton gradient. This chain is NAD(P)H-quinone oxidoreductase subunit 5, chloroplastic (ndhF), found in Pisum sativum (Garden pea).